The sequence spans 596 residues: Elongation factor 4 (596 aa).

Residues 2 to 183 enclose the tr-type G domain; it reads NNIRNFSIIA…TIIRKIPPPK (182 aa). GTP is bound by residues 14-19 and 130-133; these read DHGKST and NKID.

Belongs to the TRAFAC class translation factor GTPase superfamily. Classic translation factor GTPase family. LepA subfamily.

It localises to the cell inner membrane. The catalysed reaction is GTP + H2O = GDP + phosphate + H(+). Functionally, required for accurate and efficient protein synthesis under certain stress conditions. May act as a fidelity factor of the translation reaction, by catalyzing a one-codon backward translocation of tRNAs on improperly translocated ribosomes. Back-translocation proceeds from a post-translocation (POST) complex to a pre-translocation (PRE) complex, thus giving elongation factor G a second chance to translocate the tRNAs correctly. Binds to ribosomes in a GTP-dependent manner. This Campylobacter fetus subsp. fetus (strain 82-40) protein is Elongation factor 4.